The sequence spans 240 residues: MGRAFEYRRAAKEKRWDKMSKVFPKLAKAITLAAKDGGSEPDTNAKLRTAILNAKAQNMPKDNIDAAIKRASSKEGNLSEITYEGKANFGVLIIMECMTDNPTRTIANLKSYFNKTQGASIVPNGSLEFMFNRKSVFECLKNEVENLKLSLEDLEFALIDYGLEELEEVGDKIIIRGDYNSFKLLNEGFESLKLPILKAGLQRIATTPIELNDEQMELTEKLLDRIEDDDDVVALYTNIE.

The protein belongs to the TACO1 family.

It localises to the cytoplasm. The chain is Probable transcriptional regulatory protein HPAG1_0159 from Helicobacter pylori (strain HPAG1).